The chain runs to 398 residues: Ubiquitin-like modifier-activating enzyme 5 (398 aa).

Residues Gly76, Asp97, Lys120, Asn143, and Asn177 each coordinate ATP. Zn(2+) contacts are provided by Cys219 and Cys222. Residue Cys243 is the Glycyl thioester intermediate of the active site. Positions 296 and 301 each coordinate Zn(2+).

This sequence belongs to the ubiquitin-activating E1 family. UBA5 subfamily.

Functionally, E1-like enzyme which activates UFM1. This is Ubiquitin-like modifier-activating enzyme 5 from Drosophila grimshawi (Hawaiian fruit fly).